A 62-amino-acid polypeptide reads, in one-letter code: Bowman-Birk type proteinase inhibitor (62 aa).

7 disulfides stabilise this stretch: C8/C61, C9/C24, C12/C57, C14/C22, C31/C38, C35/C50, and C40/C48.

In terms of assembly, forms a monomer at protein concentrations of below 1 mM. At concentrations of above 2 mM, self-associates.

Functionally, inhibits trypsin but not chymotrypsin. Inhibits the trypsin-like proteinase activity present in larvae of the crop pests Adoxophyes orana, Hyphantria cunea, Lobesia botrana and Ostrinia nubilalis. This Medicago scutellata (Snail medic) protein is Bowman-Birk type proteinase inhibitor.